Reading from the N-terminus, the 145-residue chain is Basic phospholipase A2 PC10 (145 aa).

The signal sequence occupies residues 1–21 (MYPAHLLLLLAVCVSLLGASA). Positions 22–27 (IPPLPL) are excised as a propeptide. Cystine bridges form between cysteine 38–cysteine 98, cysteine 54–cysteine 144, cysteine 56–cysteine 72, cysteine 71–cysteine 125, cysteine 78–cysteine 118, cysteine 87–cysteine 111, and cysteine 105–cysteine 116. Ca(2+) is bound by residues tyrosine 55, glycine 57, and glycine 59. Histidine 75 is a catalytic residue. Aspartate 76 contacts Ca(2+). Aspartate 119 is an active-site residue.

It belongs to the phospholipase A2 family. Group I subfamily. D49 sub-subfamily. The cofactor is Ca(2+).

It is found in the secreted. The catalysed reaction is a 1,2-diacyl-sn-glycero-3-phosphocholine + H2O = a 1-acyl-sn-glycero-3-phosphocholine + a fatty acid + H(+). In terms of biological role, PLA2 catalyzes the calcium-dependent hydrolysis of the 2-acyl groups in 3-sn-phosphoglycerides. The sequence is that of Basic phospholipase A2 PC10 from Laticauda laticaudata (Blue-ringed sea krait).